The following is a 571-amino-acid chain: MEEPPLLPGETIKDMAKDVTYICPFTGAIRGTLTVTNYRLYFKSMERDPPFVLDASLGVINRVEKIGGASSRGENSYGLEIVCKDIRNLRFAHKPEGRTRRSIFENLMKYAFPVSNNLPLFAFEYKEVFPENGWKVYDPIWEYRRQGIPNESWRLSKINEHYELCDTYPAILAVPVNIPDEELKRVASFRSRGRIPVLSWIHPESQATITRCSQPMVGVSGKRSKEDEKYLQAIMDSNAQSHKIFIFDARPSVNAVANKAKGGGYESEDAYQNAELVFLDIHNIHVMRESLRKLKEIVYPNIEETHWLSNLESTHWLEHIKLILAGALRIADKVESGKTSVVVHCSDGWDRTAQLTSLSLLMLDGYYRTIRGFEVLVEKEWLSFGHRFQLRVGHGDKNHADADRSPVFLQFIDCVWQMTRQFPTAFEFNEYFLITILDHLYSCLFGTFLCSSEQQRVKESLPKKTVSLWSYINSQLEDFTNPLYVSYSNHVLYPVASMRHLELWVGYYIRWNPRMKPQEPVHNRYKELLAKRAELQKKVEELQREITNRSTSSSERAGSPAQCVTPVQTVV.

The 67-residue stretch at 1-67 folds into the GRAM domain; that stretch reads MEEPPLLPGE…GVINRVEKIG (67 aa). One can recognise a Myotubularin phosphatase domain in the interval 133 to 508; sequence GWKVYDPIWE…RHLELWVGYY (376 aa). Residues asparagine 258, asparagine 283, and isoleucine 284 each contribute to the a 1,2-diacyl-sn-glycero-3-phospho-(1D-myo-inositol-3,5-bisphosphate) site. A 1,2-diacyl-sn-glycero-3-phospho-(1D-myo-inositol-3-phosphate) contacts are provided by asparagine 258, asparagine 283, and isoleucine 284. The active-site Phosphocysteine intermediate is cysteine 345. Residues serine 346, aspartate 347, glycine 348, tryptophan 349, aspartate 350, arginine 351, arginine 387, and arginine 391 each coordinate a 1,2-diacyl-sn-glycero-3-phospho-(1D-myo-inositol-3,5-bisphosphate). A 1,2-diacyl-sn-glycero-3-phospho-(1D-myo-inositol-3-phosphate)-binding residues include serine 346, aspartate 347, glycine 348, tryptophan 349, aspartate 350, and arginine 351. Arginine 391 is a binding site for a 1,2-diacyl-sn-glycero-3-phospho-(1D-myo-inositol-3-phosphate). A coiled-coil region spans residues 521 to 553; sequence VHNRYKELLAKRAELQKKVEELQREITNRSTSS. The tract at residues 544 to 571 is disordered; sequence REITNRSTSSSERAGSPAQCVTPVQTVV.

It belongs to the protein-tyrosine phosphatase family. Non-receptor class myotubularin subfamily. As to quaternary structure, homooligomer and heterooligomer.

It is found in the cytoplasm. It localises to the early endosome membrane. It catalyses the reaction a 1,2-diacyl-sn-glycero-3-phospho-(1D-myo-inositol-3,5-bisphosphate) + H2O = a 1,2-diacyl-sn-glycero-3-phospho-(1D-myo-inositol-5-phosphate) + phosphate. The enzyme catalyses a 1,2-diacyl-sn-glycero-3-phospho-(1D-myo-inositol-3-phosphate) + H2O = a 1,2-diacyl-sn-glycero-3-phospho-(1D-myo-inositol) + phosphate. The catalysed reaction is 1,2-dioctanoyl-sn-glycero-3-phospho-(1-D-myo-inositol-3-phosphate) + H2O = 1,2-dioctanoyl-sn-glycero-3-phospho-(1D-myo-inositol) + phosphate. It carries out the reaction 1,2-dioctanoyl-sn-glycero-3-phospho-(1D-myo-inositol-3,5-bisphosphate) + H2O = 1,2-dioctanoyl-sn-glycero-3-phospho-(1D-myo-inositol-5-phosphate) + phosphate. Lipid phosphatase that specifically dephosphorylates the D-3 position of phosphatidylinositol 3-phosphate and phosphatidylinositol 3,5-bisphosphate, generating phosphatidylinositol and phosphatidylinositol 5-phosphate. Regulates the level of these phosphoinositides critical for various biological processes including autophagy initiation and autophagosome maturation. This is Phosphatidylinositol-3,5-bisphosphate 3-phosphatase MTMR2 from Gallus gallus (Chicken).